The chain runs to 299 residues: HTH-type transcriptional regulator ArgP (299 aa).

Residues 4–60 (PDYRALQALDAVIRERGFERAAQKLCITQSAVSQRIKQLENLFGQPLLVRTVPPQPT) form the HTH lysR-type domain. Residues 21-40 (FERAAQKLCITQSAVSQRIK) constitute a DNA-binding region (H-T-H motif).

The protein belongs to the LysR transcriptional regulatory family. As to quaternary structure, homodimer.

In terms of biological role, controls the transcription of genes involved in arginine and lysine metabolism. The sequence is that of HTH-type transcriptional regulator ArgP from Proteus mirabilis (strain HI4320).